The sequence spans 369 residues: Chorismate synthase (369 aa).

Positions 48 and 54 each coordinate NADP(+). FMN contacts are provided by residues 125–127 (RSS), 238–239 (NA), Gly278, 293–297 (KPTSS), and Arg319.

It belongs to the chorismate synthase family. Homotetramer. FMNH2 is required as a cofactor.

The enzyme catalyses 5-O-(1-carboxyvinyl)-3-phosphoshikimate = chorismate + phosphate. The protein operates within metabolic intermediate biosynthesis; chorismate biosynthesis; chorismate from D-erythrose 4-phosphate and phosphoenolpyruvate: step 7/7. Functionally, catalyzes the anti-1,4-elimination of the C-3 phosphate and the C-6 proR hydrogen from 5-enolpyruvylshikimate-3-phosphate (EPSP) to yield chorismate, which is the branch point compound that serves as the starting substrate for the three terminal pathways of aromatic amino acid biosynthesis. This reaction introduces a second double bond into the aromatic ring system. This Cupriavidus metallidurans (strain ATCC 43123 / DSM 2839 / NBRC 102507 / CH34) (Ralstonia metallidurans) protein is Chorismate synthase.